The following is a 288-amino-acid chain: Tryptophan 2,3-dioxygenase (288 aa).

Substrate contacts are provided by residues 57-61 (FIIQH), tyrosine 119, and arginine 123. Histidine 246 is a binding site for heme. Threonine 260 provides a ligand contact to substrate.

This sequence belongs to the tryptophan 2,3-dioxygenase family. In terms of assembly, homotetramer. The cofactor is heme.

It catalyses the reaction L-tryptophan + O2 = N-formyl-L-kynurenine. Its pathway is amino-acid degradation; L-tryptophan degradation via kynurenine pathway; L-kynurenine from L-tryptophan: step 1/2. Heme-dependent dioxygenase that catalyzes the oxidative cleavage of the L-tryptophan (L-Trp) pyrrole ring and converts L-tryptophan to N-formyl-L-kynurenine. Catalyzes the oxidative cleavage of the indole moiety. The sequence is that of Tryptophan 2,3-dioxygenase from Pseudomonas aeruginosa (strain ATCC 15692 / DSM 22644 / CIP 104116 / JCM 14847 / LMG 12228 / 1C / PRS 101 / PAO1).